Here is a 455-residue protein sequence, read N- to C-terminus: Ribulose bisphosphate carboxylase large chain (455 aa).

K5 carries the post-translational modification N6,N6,N6-trimethyllysine. Residues N114 and T164 each contribute to the substrate site. K166 serves as the catalytic Proton acceptor. K168 contacts substrate. Mg(2+)-binding residues include K192, D194, and E195. An N6-carboxylysine modification is found at K192. H285 functions as the Proton acceptor in the catalytic mechanism. Residues R286, H318, and S370 each coordinate substrate.

This sequence belongs to the RuBisCO large chain family. Type I subfamily. As to quaternary structure, heterohexadecamer of 8 large chains and 8 small chains; disulfide-linked. The disulfide link is formed within the large subunit homodimers. Requires Mg(2+) as cofactor. Post-translationally, the disulfide bond which can form in the large chain dimeric partners within the hexadecamer appears to be associated with oxidative stress and protein turnover.

It is found in the plastid. It localises to the chloroplast. The catalysed reaction is 2 (2R)-3-phosphoglycerate + 2 H(+) = D-ribulose 1,5-bisphosphate + CO2 + H2O. It catalyses the reaction D-ribulose 1,5-bisphosphate + O2 = 2-phosphoglycolate + (2R)-3-phosphoglycerate + 2 H(+). RuBisCO catalyzes two reactions: the carboxylation of D-ribulose 1,5-bisphosphate, the primary event in carbon dioxide fixation, as well as the oxidative fragmentation of the pentose substrate in the photorespiration process. Both reactions occur simultaneously and in competition at the same active site. This is Ribulose bisphosphate carboxylase large chain from Erythrina crista-galli (Cockspur coral tree).